The primary structure comprises 328 residues: tRNA dimethylallyltransferase (328 aa).

Gly-25 to Ser-32 is a binding site for ATP. Thr-27–Ser-32 contacts substrate. Residues Asp-50 to Gln-53 are interaction with substrate tRNA.

It belongs to the IPP transferase family. Monomer. Requires Mg(2+) as cofactor.

The enzyme catalyses adenosine(37) in tRNA + dimethylallyl diphosphate = N(6)-dimethylallyladenosine(37) in tRNA + diphosphate. Catalyzes the transfer of a dimethylallyl group onto the adenine at position 37 in tRNAs that read codons beginning with uridine, leading to the formation of N6-(dimethylallyl)adenosine (i(6)A). The chain is tRNA dimethylallyltransferase from Dehalococcoides mccartyi (strain ATCC BAA-2100 / JCM 16839 / KCTC 5957 / BAV1).